A 102-amino-acid polypeptide reads, in one-letter code: Putative UPF0320 protein YMR326C (102 aa).

This sequence belongs to the UPF0320 family.

This Saccharomyces cerevisiae (strain ATCC 204508 / S288c) (Baker's yeast) protein is Putative UPF0320 protein YMR326C.